Reading from the N-terminus, the 271-residue chain is 3-methyl-2-oxobutanoate hydroxymethyltransferase (271 aa).

Mg(2+) is bound by residues Asp44 and Asp83. Residues 44–45 (DS), Asp83, and Lys112 contribute to the 3-methyl-2-oxobutanoate site. Glu114 contributes to the Mg(2+) binding site. Glu181 serves as the catalytic Proton acceptor.

Belongs to the PanB family. In terms of assembly, homodecamer; pentamer of dimers. Mg(2+) serves as cofactor.

Its subcellular location is the cytoplasm. It carries out the reaction 3-methyl-2-oxobutanoate + (6R)-5,10-methylene-5,6,7,8-tetrahydrofolate + H2O = 2-dehydropantoate + (6S)-5,6,7,8-tetrahydrofolate. It functions in the pathway cofactor biosynthesis; coenzyme A biosynthesis. In terms of biological role, catalyzes the reversible reaction in which hydroxymethyl group from 5,10-methylenetetrahydrofolate is transferred onto alpha-ketoisovalerate to form ketopantoate. This Staphylothermus marinus (strain ATCC 43588 / DSM 3639 / JCM 9404 / F1) protein is 3-methyl-2-oxobutanoate hydroxymethyltransferase.